The primary structure comprises 424 residues: Serine hydroxymethyltransferase (424 aa).

Residues leucine 118 and 122–124 (GHL) each bind (6S)-5,6,7,8-tetrahydrofolate. At lysine 227 the chain carries N6-(pyridoxal phosphate)lysine. Position 351–353 (351–353 (SPF)) interacts with (6S)-5,6,7,8-tetrahydrofolate.

This sequence belongs to the SHMT family. Homodimer. Requires pyridoxal 5'-phosphate as cofactor.

The protein localises to the cytoplasm. The enzyme catalyses (6R)-5,10-methylene-5,6,7,8-tetrahydrofolate + glycine + H2O = (6S)-5,6,7,8-tetrahydrofolate + L-serine. Its pathway is one-carbon metabolism; tetrahydrofolate interconversion. It functions in the pathway amino-acid biosynthesis; glycine biosynthesis; glycine from L-serine: step 1/1. In terms of biological role, catalyzes the reversible interconversion of serine and glycine with tetrahydrofolate (THF) serving as the one-carbon carrier. This reaction serves as the major source of one-carbon groups required for the biosynthesis of purines, thymidylate, methionine, and other important biomolecules. Also exhibits THF-independent aldolase activity toward beta-hydroxyamino acids, producing glycine and aldehydes, via a retro-aldol mechanism. In Pseudothermotoga lettingae (strain ATCC BAA-301 / DSM 14385 / NBRC 107922 / TMO) (Thermotoga lettingae), this protein is Serine hydroxymethyltransferase.